The following is a 312-amino-acid chain: Deoxycytidylate deaminase (312 aa).

One can recognise a CMP/dCMP-type deaminase domain in the interval 162–291 (SWDSYFMKLA…RMDEESFKVL (130 aa)). Residue H233 participates in Zn(2+) binding. E235 functions as the Proton donor in the catalytic mechanism. The Zn(2+) site is built by C260 and C263.

It belongs to the cytidine and deoxycytidylate deaminase family. Zn(2+) serves as cofactor.

It carries out the reaction dCMP + H2O + H(+) = dUMP + NH4(+). Its activity is regulated as follows. Allosteric enzyme whose activity is greatly influenced by the end products of its metabolic pathway, dCTP and dTTP. In terms of biological role, catalyzes the hydrolytic deamination of dCMP to yield dUMP, the nucleotide substrate for thymidylate synthetase. In Saccharomyces cerevisiae (strain ATCC 204508 / S288c) (Baker's yeast), this protein is Deoxycytidylate deaminase.